Consider the following 658-residue polypeptide: MDKFEISSKFKPSDDQEKAVTNIVDSIRSGNKFNVLLGVTGSGKTFTMANVIKRLNMPTLIMTHNKSLAAQLYSEFKGFFPKNHVEYFISYYDYYQPEAYIPRQDLFIEKDSSINEELERLRLSATANLLEFDDVVVVASVSANYGLGNPAEYKGMVLLLSLGMSLNQKELLLKLVDMGYKRNDAYFDRGDFRVNGDVVDIYPAYFNDEAIRLEFFGDELDAMYHFDVLENKRTKDVSKFILYATSQFIVGENRLKQAIKDIELELEDRLAFYEKENRLVEYQRLKQRVEFDLEMLSSTGSTKGVENYARYLTGQKAGETPYSLFDYFEVSGKDYLVIVDESHVSLPQFRGMYAGDRSRKEVLVEYGFRLPSALDNRPLKLDEFIAKKANYLFVSATPNQYEIDLSQGHVYEQILRPTGLLDPRIEVISSDNQVEVLFDRAKAVIARGERVLVTTLTKKMSEELTRYYQELGIKVKYMHSDIDAVERNELIRGLRKGEFDMLVGINLLREGLDLPEVSLVAVLDADKEGFLRSRTSLIQTMGRAARNVNGTVILFANKITNSMKEAIDTTEARRKYQGDYNKKYGITPRSASRNLEDSLKEEDLPNLYNKAKKLEKMPASERAKIVKELRKQMLEAAKNLEFEKAAALRDEIAKLREL.

The Helicase ATP-binding domain occupies 25–182 (DSIRSGNKFN…LKLVDMGYKR (158 aa)). 38–45 (GVTGSGKT) contacts ATP. The Beta-hairpin signature appears at 91–114 (YYDYYQPEAYIPRQDLFIEKDSSI). Residues 433–596 (QVEVLFDRAK…TPRSASRNLE (164 aa)) form the Helicase C-terminal domain. The UVR domain occupies 623–658 (AKIVKELRKQMLEAAKNLEFEKAAALRDEIAKLREL).

This sequence belongs to the UvrB family. Forms a heterotetramer with UvrA during the search for lesions. Interacts with UvrC in an incision complex.

It is found in the cytoplasm. In terms of biological role, the UvrABC repair system catalyzes the recognition and processing of DNA lesions. A damage recognition complex composed of 2 UvrA and 2 UvrB subunits scans DNA for abnormalities. Upon binding of the UvrA(2)B(2) complex to a putative damaged site, the DNA wraps around one UvrB monomer. DNA wrap is dependent on ATP binding by UvrB and probably causes local melting of the DNA helix, facilitating insertion of UvrB beta-hairpin between the DNA strands. Then UvrB probes one DNA strand for the presence of a lesion. If a lesion is found the UvrA subunits dissociate and the UvrB-DNA preincision complex is formed. This complex is subsequently bound by UvrC and the second UvrB is released. If no lesion is found, the DNA wraps around the other UvrB subunit that will check the other stand for damage. The polypeptide is UvrABC system protein B (Campylobacter fetus subsp. fetus (strain 82-40)).